A 249-amino-acid polypeptide reads, in one-letter code: Acetylglutamate kinase (249 aa).

Substrate is bound by residues 38-39 (GG), Arg60, and Asn147.

Belongs to the acetylglutamate kinase family. ArgB subfamily.

It is found in the cytoplasm. The catalysed reaction is N-acetyl-L-glutamate + ATP = N-acetyl-L-glutamyl 5-phosphate + ADP. Its pathway is amino-acid biosynthesis; L-arginine biosynthesis; N(2)-acetyl-L-ornithine from L-glutamate: step 2/4. Its function is as follows. Catalyzes the ATP-dependent phosphorylation of N-acetyl-L-glutamate. The chain is Acetylglutamate kinase from Deinococcus geothermalis (strain DSM 11300 / CIP 105573 / AG-3a).